A 75-amino-acid chain; its full sequence is MYB-like transcription factor ETC3 (75 aa).

The disordered stretch occupies residues 1–20; it reads MDNHRRTKQPKTNSIVTSSS. In terms of domain architecture, Myb-like spans 34-71; that stretch reads SQEEEDLVSRMHKLVGDRWELIAGRIPGRTAGEIERFW.

In terms of tissue distribution, expressed in leaf epidermal cells, stomate guard cells in leaves, cotyledons and hypocotyls, inflorescences, developing seeds and siliques.

It localises to the nucleus. Its function is as follows. MYB-type transcription factor involved in epidermal cell fate specification. Acts as a negative regulator of trichome development, including endoreplication, by mediating lateral inhibition. Promotes the formation of hair developing cells in H position in root epidermis, probably by inhibiting non-hair cell formation. May have pleiotropic effects on flowering development and epidermal cell size through the regulation of endoreduplication. This is MYB-like transcription factor ETC3 (ETC3) from Arabidopsis thaliana (Mouse-ear cress).